Reading from the N-terminus, the 289-residue chain is Testis-expressed protein 26 (289 aa).

A disordered region spans residues 1–26 (MEQPGPRAPDPSLCHHNLQPTDDPNW). Mn regions lie at residues 30–42 (ATTM…PKTG), 69–83 (QTQY…SHSK), 144–157 (ISLT…RSKA), 179–193 (DTEF…AKIP), and 233–247 (QTTY…YPDF).

This chain is Testis-expressed protein 26 (TEX26), found in Homo sapiens (Human).